The primary structure comprises 594 residues: Suppressor of hairless protein (594 aa).

The segment at 20 to 87 (ETTVVNPNGS…QQQQQHQQQM (68 aa)) is disordered. The segment covering 58–87 (QQQQQQLQVHHQQQQQQQQQQQQQQHQQQM) has biased composition (low complexity). DNA-binding stretches follow at residues 131 to 141 (QKSYGNEKRFF), 239 to 244 (SKPSKK), and 266 to 271 (RLRSQT). The IPT/TIG domain occupies 429–519 (PIVNSLNLNG…YATGLTFTYT (91 aa)). Composition is skewed to low complexity over residues 542–562 (NNNN…AGSP) and 569–580 (QQQQQQHQALPS). Residues 542-594 (NNNNNITSISNNNNSNNAGSPAAGGGLQQQQQQHQALPSISEVQWNSHGSGLS) are disordered. The span at 582–594 (SEVQWNSHGSGLS) shows a compositional bias: polar residues.

Belongs to the Su(H) family. In terms of assembly, interacts with activated cleaved Notch. Interacts with Hairless, this interaction preventing its DNA-binding activity. Interacts with insv (via BEN domain).

Its subcellular location is the nucleus. The protein resides in the cytoplasm. Functionally, transcriptional regulator that plays a central role in Notch signaling, a signaling pathway involved in cell-cell communication that regulates a broad spectrum of cell-fate determinations. Binds directly the 5'-GTGRGAR-3' DNA consensus sequence, which is present in the regulatory region of several genes. Acts as a transcriptional repressor when it is not associated with Notch proteins. When associated with some Notch protein, it acts as a transcriptional activator that activates transcription of Notch target genes. Required for transcription of Sim. Specifically binds to the immunoglobulin kappa-type J segment recombination signal sequence. Required for neurogenesis in imaginal disks. In the larval brain, might play a role as a transducer of Notch signaling during type II neuroblast development. Also functions independently of the Notch pathway, in the development of the bristle sensory organ precursor cell. This Drosophila melanogaster (Fruit fly) protein is Suppressor of hairless protein (Su(H)).